Consider the following 67-residue polypeptide: Prokaryotic ubiquitin-like protein Pup (67 aa).

Residues 1–11 (MAGQEQQQPQS) show a composition bias toward low complexity. The interval 1–47 (MAGQEQQQPQSRESEFEDDAPATPPAPGEAQASAATQGVDDLLDEID) is disordered. The ARC ATPase binding stretch occupies residues 25-61 (PAPGEAQASAATQGVDDLLDEIDGVLESNAEEFVRAF). Deamidated glutamine is present on glutamine 67. Glutamine 67 participates in a covalent cross-link: Isoglutamyl lysine isopeptide (Gln-Lys) (interchain with K-? in acceptor proteins).

This sequence belongs to the prokaryotic ubiquitin-like protein family. As to quaternary structure, strongly interacts with the proteasome-associated ATPase ARC through a hydrophobic interface; the interacting region of Pup lies in its C-terminal half. There is one Pup binding site per ARC hexamer ring. Post-translationally, is modified by deamidation of its C-terminal glutamine to glutamate by the deamidase Dop, a prerequisite to the subsequent pupylation process.

The protein operates within protein degradation; proteasomal Pup-dependent pathway. Protein modifier that is covalently attached to lysine residues of substrate proteins, thereby targeting them for proteasomal degradation. The tagging system is termed pupylation. This chain is Prokaryotic ubiquitin-like protein Pup, found in Arthrobacter sp. (strain FB24).